The chain runs to 530 residues: Pyridoxine/pyridoxamine 5'-phosphate oxidase 1, chloroplastic (530 aa).

Residues 1 to 64 (MRNVIRRVTT…TLCTKVIIPN (64 aa)) constitute a chloroplast transit peptide. Residue methionine 65 is modified to N-acetylmethionine. The region spanning 81 to 297 (AAEIDETLMG…SVAEKYKLEL (217 aa)) is the YjeF N-terminal domain. Residue 131 to 135 (NNGGD) coordinates (6S)-NADPHX. K(+)-binding residues include asparagine 132 and aspartate 196. (6S)-NADPHX contacts are provided by residues 200–206 (GFSFHGA) and aspartate 238. Serine 241 is a K(+) binding site. 247-250 (EGDH) serves as a coordination point for pyridoxal 5'-phosphate. 321 to 324 (RVNY) is a substrate binding site. Residue 325-327 (VSP) participates in pyridoxal 5'-phosphate binding. Residue 374–377 (RMVL) participates in FMN binding. Lysine 379 serves as a coordination point for pyridoxal 5'-phosphate. FMN is bound by residues 389–390 (FT), 395–396 (KK), and glutamine 418. Residues tyrosine 436, arginine 440, and serine 444 each coordinate pyridoxal 5'-phosphate. Residues 453-454 (QS) and tryptophan 499 each bind FMN. Residue 505–507 (RLH) participates in pyridoxal 5'-phosphate binding. Arginine 509 is a binding site for FMN.

This sequence in the N-terminal section; belongs to the NnrE/AIBP family. It in the C-terminal section; belongs to the pyridoxamine 5'-phosphate oxidase family. Homodimer. Requires FMN as cofactor. K(+) is required as a cofactor. As to expression, expressed in leaves, stems, flowers and roots.

Its subcellular location is the plastid. The protein resides in the chloroplast. The catalysed reaction is pyridoxamine 5'-phosphate + O2 + H2O = pyridoxal 5'-phosphate + H2O2 + NH4(+). It catalyses the reaction pyridoxine 5'-phosphate + O2 = pyridoxal 5'-phosphate + H2O2. The enzyme catalyses (6R)-NADHX = (6S)-NADHX. It carries out the reaction (6R)-NADPHX = (6S)-NADPHX. The protein operates within cofactor metabolism; pyridoxal 5'-phosphate salvage; pyridoxal 5'-phosphate from pyridoxamine 5'-phosphate: step 1/1. Its pathway is cofactor metabolism; pyridoxal 5'-phosphate salvage; pyridoxal 5'-phosphate from pyridoxine 5'-phosphate: step 1/1. Catalyzes the oxidation of either pyridoxine 5'-phosphate (PNP) or pyridoxamine 5'-phosphate (PMP) into pyridoxal 5'-phosphate (PLP). Involved in the PLP salvage pathway. Has a higher preference for PNP over PMP. May also catalyze the epimerization of the S- and R-forms of NAD(P)HX, a damaged form of NAD(P)H that is a result of enzymatic or heat-dependent hydration. This is a prerequisite for the S-specific NAD(P)H-hydrate dehydratase to allow the repair of both epimers of NAD(P)HX. The sequence is that of Pyridoxine/pyridoxamine 5'-phosphate oxidase 1, chloroplastic (PPOX1) from Arabidopsis thaliana (Mouse-ear cress).